A 147-amino-acid polypeptide reads, in one-letter code: Hemoglobin subunit beta (147 aa).

The region spanning 3 to 147 (HWTAEEKQLI…VAHALARKYH (145 aa)) is the Globin domain. H64 and H93 together coordinate heme b.

The protein belongs to the globin family. Heterotetramer of 2 alpha (or alpha-D) and 2 beta chains. In terms of tissue distribution, red blood cells.

In terms of biological role, involved in oxygen transport from the lung to the various peripheral tissues. The beta chain is a component of adult hemoglobin A and D. The sequence is that of Hemoglobin subunit beta (HBB) from Gallus gallus (Chicken).